The following is a 361-amino-acid chain: DNA replication and repair protein RecF (361 aa).

30–37 (GDNAQGKT) serves as a coordination point for ATP.

The protein belongs to the RecF family.

The protein localises to the cytoplasm. Functionally, the RecF protein is involved in DNA metabolism; it is required for DNA replication and normal SOS inducibility. RecF binds preferentially to single-stranded, linear DNA. It also seems to bind ATP. The polypeptide is DNA replication and repair protein RecF (Clostridium botulinum (strain Eklund 17B / Type B)).